Consider the following 544-residue polypeptide: Lysophosphatidylcholine acyltransferase 2 (544 aa).

Residues 1–57 lie on the Cytoplasmic side of the membrane; sequence MSRCAQAAEVAATVPGAGVGNVGLRPPMVPRQASFFPPPVPNPFVQQTQIGSARRVQ. Residues 58-78 form a helical; Signal-anchor for type II membrane protein membrane-spanning segment; sequence IVLLGIILLPIRVLLVALILL. The Lumenal segment spans residues 79-544; sequence LAWPFAAIST…EESTSDKKDD (466 aa). Residues 146–151 carry the HXXXXD motif motif; it reads HSTFFD. Positions 220–223 match the EGTC motif motif; the sequence is EGTC. 2 EF-hand domains span residues 391–426 and 428–463; these read PVSD…LCNP and NTEE…SLGV. The Ca(2+) site is built by aspartate 404, asparagine 406, aspartate 408, serine 410, glutamate 415, aspartate 441, aspartate 443, aspartate 445, tyrosine 447, and glutamate 452. A compositionally biased stretch (polar residues) spans 518-529; the sequence is VQTTPSTASNKV. Residues 518–544 form a disordered region; the sequence is VQTTPSTASNKVSPEKHEESTSDKKDD. Residues 530 to 544 are compositionally biased toward basic and acidic residues; the sequence is SPEKHEESTSDKKDD.

It belongs to the 1-acyl-sn-glycerol-3-phosphate acyltransferase family.

Its subcellular location is the endoplasmic reticulum membrane. It is found in the golgi apparatus membrane. The protein localises to the cell membrane. It localises to the lipid droplet. It catalyses the reaction a 1-acyl-sn-glycero-3-phosphocholine + an acyl-CoA = a 1,2-diacyl-sn-glycero-3-phosphocholine + CoA. The enzyme catalyses a 1-O-alkyl-sn-glycero-3-phosphocholine + acetyl-CoA = a 1-O-alkyl-2-acetyl-sn-glycero-3-phosphocholine + CoA. The catalysed reaction is a 1-acyl-sn-glycero-3-phosphate + an acyl-CoA = a 1,2-diacyl-sn-glycero-3-phosphate + CoA. It carries out the reaction a 1-O-(1Z-alkenyl)-sn-glycero-3-phosphocholine + an acyl-CoA = a 1-O-(1Z-alkenyl)-2-acyl-sn-glycero-3-phosphocholine + CoA. It catalyses the reaction 1-hexadecanoyl-sn-glycero-3-phosphate + (9Z)-octadecenoyl-CoA = 1-hexadecanoyl-2-(9Z-octadecenoyl)-sn-glycero-3-phosphate + CoA. The enzyme catalyses 1-(9Z-octadecenoyl)-sn-glycero-3-phosphate + (9Z)-octadecenoyl-CoA = 1,2-di-(9Z-octadecenoyl)-sn-glycero-3-phosphate + CoA. The catalysed reaction is 1-(9Z-octadecenoyl)-sn-glycero-3-phosphate + hexadecanoyl-CoA = 1-(9Z)-octadecenoyl-2-hexadecanoyl-sn-glycero-3-phosphate + CoA. It carries out the reaction 1-heptadecanoyl-sn-glycero-3-phosphate + (9Z)-octadecenoyl-CoA = 1-heptadecanoyl-2-(9Z)-octadecenoyl-sn-glycero-3-phosphate + CoA. It catalyses the reaction 1-octadecanoyl-sn-glycero-3-phosphate + (9Z)-octadecenoyl-CoA = 1-octadecanoyl-2-(9Z-octadecenoyl)-sn-glycero-3-phosphate + CoA. The enzyme catalyses heptadecanoyl-CoA + 1-(9Z-octadecenoyl)-sn-glycero-3-phosphate = 1-(9Z)-octadecenoyl-2-heptadecanoyl-sn-glycero-3-phosphate + CoA. The catalysed reaction is 1-(9Z-octadecenoyl)-sn-glycero-3-phosphate + (9Z,12Z)-octadecadienoyl-CoA = 1-(9Z)-octadecenoyl-2-(9Z,12Z)-octadecadienoyl-sn-glycero-3-phosphate + CoA. It carries out the reaction 1-(9Z-octadecenoyl)-sn-glycero-3-phosphate + tetradecanoyl-CoA = 1-(9Z)-octadecenoyl-2-tetradecanoyl-sn-glycero-3-phosphate + CoA. It catalyses the reaction pentadecanoyl-CoA + 1-(9Z-octadecenoyl)-sn-glycero-3-phosphate = 1-(9Z)-octadecenoyl-2-pentadecanoyl-sn-glycero-3-phosphate + CoA. The enzyme catalyses nonadecanoyl-CoA + 1-(9Z-octadecenoyl)-sn-glycero-3-phosphate = 1-(9Z)-octadecenoyl-2-nonadecanoyl-sn-glycero-3-phosphate + CoA. The catalysed reaction is 1-hexadecanoyl-sn-glycero-3-phosphocholine + (9Z)-octadecenoyl-CoA = 1-hexadecanoyl-2-(9Z-octadecenoyl)-sn-glycero-3-phosphocholine + CoA. It carries out the reaction 1-O-hexadecyl-sn-glycero-3-phosphocholine + acetyl-CoA = 1-O-hexadecyl-2-acetyl-sn-glycero-3-phosphocholine + CoA. It catalyses the reaction 1-O-octadecyl-sn-glycero-3-phosphocholine + acetyl-CoA = 1-O-octadecyl-2-acetyl-sn-glycero-3-phosphocholine + CoA. The enzyme catalyses 1-hexadecanoyl-sn-glycero-3-phosphocholine + acetyl-CoA = 1-hexadecanoyl-2-acetyl-sn-glycero-3-phosphocholine + CoA. The catalysed reaction is 1-octadecanoyl-sn-glycero-3-phosphocholine + acetyl-CoA = 1-octadecanoyl-2-acetyl-sn-glycero-3-phosphocholine + CoA. It carries out the reaction a 1-O-(1Z-alkenyl)-sn-glycero-3-phosphocholine + acetyl-CoA = 1-O-(1Z)-alkenyl-2-acetyl-sn-glycero-3-phosphocholine + CoA. It catalyses the reaction 1-O-octadecyl-sn-glycero-3-phosphocholine + (5Z,8Z,11Z,14Z)-eicosatetraenoyl-CoA = 1-O-octadecyl-2-(5Z,8Z,11Z,14Z)-eicosatetraenoyl-sn-glycero-3-phosphocholine + CoA. It functions in the pathway lipid metabolism; phospholipid metabolism. Exhibits both acyltransferase and acetyltransferase activities. Catalyzes the conversion of lysophosphatidylcholine (1-acyl-sn-glycero-3-phosphocholine or LPC) into phosphatidylcholine (1,2-diacyl-sn-glycero-3-phosphocholine or PC). Catalyzes the conversion 1-acyl-sn-glycerol-3-phosphate (lysophosphatidic acid or LPA) into 1,2-diacyl-sn-glycerol-3-phosphate (phosphatidic acid or PA) by incorporating an acyl moiety at the sn-2 position of the glycerol backbone. Involved in platelet-activating factor (PAF) biosynthesis by catalyzing the conversion of the PAF precursor, 1-O-alkyl-sn-glycero-3-phosphocholine (lyso-PAF) into 1-O-alkyl-2-acetyl-sn-glycero-3-phosphocholine (PAF). Also converts lyso-PAF to 1-O-alkyl-2-acyl-sn-glycero-3-phosphocholine (PC), a major component of cell membranes and a PAF precursor. Under resting conditions, acyltransferase activity is preferred. Upon acute inflammatory stimulus, acetyltransferase activity is enhanced and PAF synthesis increases. Involved in the regulation of lipid droplet number and size. This Homo sapiens (Human) protein is Lysophosphatidylcholine acyltransferase 2 (LPCAT2).